Reading from the N-terminus, the 164-residue chain is UPF0304 protein KPK_1463 (164 aa).

It belongs to the UPF0304 family.

The polypeptide is UPF0304 protein KPK_1463 (Klebsiella pneumoniae (strain 342)).